The sequence spans 337 residues: DNA-directed RNA polymerase subunit alpha (337 aa).

Residues 1 to 233 (MVREEVVGST…DLFIPFLHAE (233 aa)) form an alpha N-terminal domain (alpha-NTD) region. Residues 265-337 (KEIALKCIFI…FAIDLPKNKF (73 aa)) are alpha C-terminal domain (alpha-CTD).

It belongs to the RNA polymerase alpha chain family. In plastids the minimal PEP RNA polymerase catalytic core is composed of four subunits: alpha, beta, beta', and beta''. When a (nuclear-encoded) sigma factor is associated with the core the holoenzyme is formed, which can initiate transcription.

The protein localises to the plastid. It localises to the chloroplast. The enzyme catalyses RNA(n) + a ribonucleoside 5'-triphosphate = RNA(n+1) + diphosphate. In terms of biological role, DNA-dependent RNA polymerase catalyzes the transcription of DNA into RNA using the four ribonucleoside triphosphates as substrates. This chain is DNA-directed RNA polymerase subunit alpha, found in Acorus calamus (Sweet flag).